An 84-amino-acid polypeptide reads, in one-letter code: UPF0512 protein O (84 aa).

The protein belongs to the UPF0512 family.

The protein is UPF0512 protein O of Dictyostelium discoideum (Social amoeba).